The primary structure comprises 113 residues: Putative membrane protein insertion efficiency factor (113 aa).

Belongs to the UPF0161 family.

It localises to the cell inner membrane. Functionally, could be involved in insertion of integral membrane proteins into the membrane. This Campylobacter jejuni subsp. jejuni serotype O:23/36 (strain 81-176) protein is Putative membrane protein insertion efficiency factor.